We begin with the raw amino-acid sequence, 590 residues long: Aspartate--tRNA(Asp/Asn) ligase (590 aa).

E172 serves as a coordination point for L-aspartate. The interval 196-199 is aspartate; that stretch reads QLFK. Position 218 (R218) interacts with L-aspartate. ATP-binding positions include 218 to 220 and Q227; that span reads RDE. Position 449 (H449) interacts with L-aspartate. Position 484 (E484) interacts with ATP. R491 is a binding site for L-aspartate. 536 to 539 is an ATP binding site; it reads GIDR.

This sequence belongs to the class-II aminoacyl-tRNA synthetase family. Type 1 subfamily. As to quaternary structure, homodimer.

It localises to the cytoplasm. It carries out the reaction tRNA(Asx) + L-aspartate + ATP = L-aspartyl-tRNA(Asx) + AMP + diphosphate. Functionally, aspartyl-tRNA synthetase with relaxed tRNA specificity since it is able to aspartylate not only its cognate tRNA(Asp) but also tRNA(Asn). Reaction proceeds in two steps: L-aspartate is first activated by ATP to form Asp-AMP and then transferred to the acceptor end of tRNA(Asp/Asn). The chain is Aspartate--tRNA(Asp/Asn) ligase from Francisella tularensis subsp. tularensis (strain SCHU S4 / Schu 4).